Reading from the N-terminus, the 348-residue chain is Fructose-1,6-bisphosphatase class 1 (348 aa).

Mg(2+) is bound by residues Glu-92, Asp-111, Leu-113, and Asp-114. Residues 114 to 117 (DGSS) and Asn-204 contribute to the substrate site. Glu-276 is a binding site for Mg(2+).

This sequence belongs to the FBPase class 1 family. In terms of assembly, homotetramer. Mg(2+) serves as cofactor.

Its subcellular location is the cytoplasm. It carries out the reaction beta-D-fructose 1,6-bisphosphate + H2O = beta-D-fructose 6-phosphate + phosphate. Its pathway is carbohydrate biosynthesis; gluconeogenesis. In Methylorubrum extorquens (strain CM4 / NCIMB 13688) (Methylobacterium extorquens), this protein is Fructose-1,6-bisphosphatase class 1.